The chain runs to 295 residues: Transcription factor bHLH19 (295 aa).

Residues 115–164 (VLAKEHVLAERKRREKLSEKFIALSALLPGLKKADKVTILDDAISRMKQL) enclose the bHLH domain.

Homodimer. Expressed in roots and leaves.

The protein resides in the nucleus. The polypeptide is Transcription factor bHLH19 (BHLH19) (Arabidopsis thaliana (Mouse-ear cress)).